The following is a 922-amino-acid chain: Autophagy-related protein 9B (922 aa).

Disordered stretches follow at residues Met1 to Pro22 and Thr85 to Leu144. The Cytoplasmic segment spans residues Met1 to Gly206. A compositionally biased stretch (polar residues) spans Thr85–Gly114. The segment covering Ser115–Ala124 has biased composition (low complexity). The Tyrosine-based sorting signal signature appears at Tyr150 to Leu153. A helical transmembrane segment spans residues Phe207–Phe227. Over Thr228 to His275 the chain is Lumenal. A helical membrane pass occupies residues Asp276 to Leu296. Topologically, residues Arg297–Thr437 are cytoplasmic. Residues Val438–Leu458 lie within the membrane without spanning it. The Cytoplasmic segment spans residues His459 to Arg523. A helical transmembrane segment spans residues Ala524–Leu544. At Thr545 to Asp550 the chain is on the lumenal side. Residues Val551–Ala571 traverse the membrane as a helical segment. The Cytoplasmic portion of the chain corresponds to Arg572–Ala624. The stretch at Val625–Phe645 is an intramembrane region. The Cytoplasmic portion of the chain corresponds to Arg646 to His922. The interval Glu848–His922 is disordered. Composition is skewed to low complexity over residues Ser854 to Ser870 and Ser877 to Pro889. Residues Arg890–Gln899 are compositionally biased toward polar residues.

It belongs to the ATG9 family. Homotrimer; forms a homotrimer with a central pore that forms a path between the two membrane leaflets. Expressed in heart, brain, and placenta and testis.

It is found in the preautophagosomal structure membrane. It carries out the reaction a 1,2-diacyl-sn-glycero-3-phosphocholine(in) = a 1,2-diacyl-sn-glycero-3-phosphocholine(out). It catalyses the reaction a 1,2-diacyl-sn-glycero-3-phospho-L-serine(in) = a 1,2-diacyl-sn-glycero-3-phospho-L-serine(out). The catalysed reaction is a 1,2-diacyl-sn-glycero-3-phosphoethanolamine(in) = a 1,2-diacyl-sn-glycero-3-phosphoethanolamine(out). Phospholipid scramblase involved in autophagy by mediating autophagosomal membrane expansion. Cycles between the preautophagosomal structure/phagophore assembly site (PAS) and the cytoplasmic vesicle pool and supplies membrane for the growing autophagosome. Lipid scramblase activity plays a key role in preautophagosomal structure/phagophore assembly by distributing the phospholipids that arrive through ATG2 (ATG2A or ATG2B) from the cytoplasmic to the luminal leaflet of the bilayer, thereby driving autophagosomal membrane expansion. In addition to autophagy, also plays a role in necrotic cell death. The polypeptide is Autophagy-related protein 9B (Mus musculus (Mouse)).